A 218-amino-acid polypeptide reads, in one-letter code: Thiopurine S-methyltransferase (218 aa).

The S-adenosyl-L-methionine site is built by Trp10, Leu45, Glu66, and Arg123.

The protein belongs to the class I-like SAM-binding methyltransferase superfamily. TPMT family.

It localises to the cytoplasm. The catalysed reaction is S-adenosyl-L-methionine + a thiopurine = S-adenosyl-L-homocysteine + a thiopurine S-methylether.. The chain is Thiopurine S-methyltransferase from Shewanella loihica (strain ATCC BAA-1088 / PV-4).